Here is a 955-residue protein sequence, read N- to C-terminus: 2-oxoglutarate dehydrogenase E1 component (955 aa).

This sequence belongs to the alpha-ketoglutarate dehydrogenase family. Homodimer. Part of the 2-oxoglutarate dehydrogenase (OGDH) complex composed of E1 (2-oxoglutarate dehydrogenase), E2 (dihydrolipoamide succinyltransferase) and E3 (dihydrolipoamide dehydrogenase); the complex contains multiple copies of the three enzymatic components (E1, E2 and E3). The cofactor is thiamine diphosphate.

It carries out the reaction N(6)-[(R)-lipoyl]-L-lysyl-[protein] + 2-oxoglutarate + H(+) = N(6)-[(R)-S(8)-succinyldihydrolipoyl]-L-lysyl-[protein] + CO2. Its function is as follows. E1 component of the 2-oxoglutarate dehydrogenase (OGDH) complex which catalyzes the decarboxylation of 2-oxoglutarate, the first step in the conversion of 2-oxoglutarate to succinyl-CoA and CO(2). This Bacillus cereus (strain ATCC 14579 / DSM 31 / CCUG 7414 / JCM 2152 / NBRC 15305 / NCIMB 9373 / NCTC 2599 / NRRL B-3711) protein is 2-oxoglutarate dehydrogenase E1 component.